The sequence spans 258 residues: Cyclohexa-1,5-dienecarbonyl-CoA hydratase (258 aa).

It belongs to the enoyl-CoA hydratase/isomerase family.

The enzyme catalyses cyclohexa-1,5-diene-1-carbonyl-CoA + H2O = 6-hydroxycyclohex-1-ene-1-carbonyl-CoA. The protein operates within aromatic compound metabolism; benzoyl-CoA degradation. Its function is as follows. Catalyzes the hydration of cyclohexa-1,5-diene-1-carboxyl-CoA. In Thauera aromatica, this protein is Cyclohexa-1,5-dienecarbonyl-CoA hydratase (dch).